We begin with the raw amino-acid sequence, 339 residues long: UDP-3-O-acylglucosamine N-acyltransferase (339 aa).

The Proton acceptor role is filled by His-239.

This sequence belongs to the transferase hexapeptide repeat family. LpxD subfamily. In terms of assembly, homotrimer.

It carries out the reaction a UDP-3-O-[(3R)-3-hydroxyacyl]-alpha-D-glucosamine + a (3R)-hydroxyacyl-[ACP] = a UDP-2-N,3-O-bis[(3R)-3-hydroxyacyl]-alpha-D-glucosamine + holo-[ACP] + H(+). The protein operates within bacterial outer membrane biogenesis; LPS lipid A biosynthesis. Its function is as follows. Catalyzes the N-acylation of UDP-3-O-acylglucosamine using 3-hydroxyacyl-ACP as the acyl donor. Is involved in the biosynthesis of lipid A, a phosphorylated glycolipid that anchors the lipopolysaccharide to the outer membrane of the cell. This chain is UDP-3-O-acylglucosamine N-acyltransferase, found in Aliivibrio fischeri (strain ATCC 700601 / ES114) (Vibrio fischeri).